Here is a 949-residue protein sequence, read N- to C-terminus: RNA polymerase-associated protein RapA (949 aa).

The Helicase ATP-binding domain maps to 164–332 (EVADRIAPRV…FARLRLLDPN (169 aa)). Residue 177–184 (DEVGLGKT) participates in ATP binding. The short motif at 278 to 281 (DEAH) is the DEAH box element. Positions 474 to 628 (RVEWLIDTLK…TCPTGNALQH (155 aa)) constitute a Helicase C-terminal domain.

Belongs to the SNF2/RAD54 helicase family. RapA subfamily. Interacts with the RNAP. Has a higher affinity for the core RNAP than for the holoenzyme. Its ATPase activity is stimulated by binding to RNAP.

Its function is as follows. Transcription regulator that activates transcription by stimulating RNA polymerase (RNAP) recycling in case of stress conditions such as supercoiled DNA or high salt concentrations. Probably acts by releasing the RNAP, when it is trapped or immobilized on tightly supercoiled DNA. Does not activate transcription on linear DNA. Probably not involved in DNA repair. The sequence is that of RNA polymerase-associated protein RapA from Stutzerimonas stutzeri (strain A1501) (Pseudomonas stutzeri).